A 277-amino-acid polypeptide reads, in one-letter code: Phosphoenolpyruvate synthase regulatory protein (277 aa).

157–164 (GVSRCGKT) provides a ligand contact to ADP.

The protein belongs to the pyruvate, phosphate/water dikinase regulatory protein family. PSRP subfamily.

The catalysed reaction is [pyruvate, water dikinase] + ADP = [pyruvate, water dikinase]-phosphate + AMP + H(+). The enzyme catalyses [pyruvate, water dikinase]-phosphate + phosphate + H(+) = [pyruvate, water dikinase] + diphosphate. In terms of biological role, bifunctional serine/threonine kinase and phosphorylase involved in the regulation of the phosphoenolpyruvate synthase (PEPS) by catalyzing its phosphorylation/dephosphorylation. The chain is Phosphoenolpyruvate synthase regulatory protein from Escherichia coli O7:K1 (strain IAI39 / ExPEC).